A 210-amino-acid chain; its full sequence is Na(+)-translocating NADH-quinone reductase subunit D (210 aa).

6 helical membrane passes run 10–30, 42–62, 72–92, 103–123, 131–151, and 178–198; these read VLIGPIVSNNPIALQILGVCS, LVMTIALTAVCALSNLFISLI, IIVQMTIIASLVIVVDQVLQA, VFVGLIITNCIVMGRAEAYAM, FMDGIGNGLGYGAILLSVGFV, and NGLLLLPPSAFFLIGALIWII.

Belongs to the NqrDE/RnfAE family. In terms of assembly, composed of six subunits; NqrA, NqrB, NqrC, NqrD, NqrE and NqrF.

It is found in the cell inner membrane. The enzyme catalyses a ubiquinone + n Na(+)(in) + NADH + H(+) = a ubiquinol + n Na(+)(out) + NAD(+). NQR complex catalyzes the reduction of ubiquinone-1 to ubiquinol by two successive reactions, coupled with the transport of Na(+) ions from the cytoplasm to the periplasm. NqrA to NqrE are probably involved in the second step, the conversion of ubisemiquinone to ubiquinol. The protein is Na(+)-translocating NADH-quinone reductase subunit D of Shewanella pealeana (strain ATCC 700345 / ANG-SQ1).